The following is a 428-amino-acid chain: Serine--tRNA ligase (428 aa).

231 to 233 (TSE) is an L-serine binding site. ATP is bound by residues 262–264 (RRE) and valine 278. Glutamate 285 lines the L-serine pocket. 349–352 (ELTS) contacts ATP. An L-serine-binding site is contributed by threonine 384.

It belongs to the class-II aminoacyl-tRNA synthetase family. Type-1 seryl-tRNA synthetase subfamily. In terms of assembly, homodimer. The tRNA molecule binds across the dimer.

The protein localises to the cytoplasm. It carries out the reaction tRNA(Ser) + L-serine + ATP = L-seryl-tRNA(Ser) + AMP + diphosphate + H(+). It catalyses the reaction tRNA(Sec) + L-serine + ATP = L-seryl-tRNA(Sec) + AMP + diphosphate + H(+). The protein operates within aminoacyl-tRNA biosynthesis; selenocysteinyl-tRNA(Sec) biosynthesis; L-seryl-tRNA(Sec) from L-serine and tRNA(Sec): step 1/1. Its function is as follows. Catalyzes the attachment of serine to tRNA(Ser). Is also able to aminoacylate tRNA(Sec) with serine, to form the misacylated tRNA L-seryl-tRNA(Sec), which will be further converted into selenocysteinyl-tRNA(Sec). In Bifidobacterium animalis subsp. lactis (strain AD011), this protein is Serine--tRNA ligase.